The primary structure comprises 118 residues: Large ribosomal subunit protein uL18 (118 aa).

A disordered region spans residues 1 to 20 (MISKPDKNKKRQRRHARVRS). A compositionally biased stretch (basic residues) spans 7-20 (KNKKRQRRHARVRS).

Belongs to the universal ribosomal protein uL18 family. As to quaternary structure, part of the 50S ribosomal subunit; part of the 5S rRNA/L5/L18/L25 subcomplex. Contacts the 5S and 23S rRNAs.

Its function is as follows. This is one of the proteins that bind and probably mediate the attachment of the 5S RNA into the large ribosomal subunit, where it forms part of the central protuberance. The protein is Large ribosomal subunit protein uL18 of Pediococcus pentosaceus (strain ATCC 25745 / CCUG 21536 / LMG 10740 / 183-1w).